A 415-amino-acid polypeptide reads, in one-letter code: Stimulator of interferon genes protein (415 aa).

The TIR domain occupies 29–163 (HVYHAFISYC…DIIQAISKPE (135 aa)). The active site involves Glu104. A 2',3'-cGAMP-binding site is contributed by Arg256. The tract at residues 387–415 (KSPSSTNMVKSEPNIYREESGKTKSVERG) is disordered. Residues 401–415 (IYREESGKTKSVERG) show a composition bias toward basic and acidic residues.

It in the N-terminal section; belongs to the Toll-like receptor family. This sequence in the C-terminal section; belongs to the TMEM173 family. In terms of assembly, homodimer.

The enzyme catalyses NAD(+) + H2O = ADP-D-ribose + nicotinamide + H(+). Functionally, sensor of cytosolic DNA from bacteria and viruses that promotes autophagy. Binds c-di-AMP, 2'3'-cGAMP, 3'3'-cGAMP and to a lesser extent c-di-GMP. Nucleotide binding has not been seen to stimulate NAD(+) hydrolase activity. The chain is Stimulator of interferon genes protein from Magallana gigas (Pacific oyster).